The sequence spans 588 residues: Interferon-activable protein 208 (588 aa).

The Pyrin domain occupies 5 to 92; the sequence is MVNYYKQIVL…VDILRKEMEK (88 aa). Disordered regions lie at residues 157–183 and 469–526; these read ATST…SLQT and EMQN…RRVN. 2 stretches are compositionally biased toward polar residues: residues 172–183 and 470–487; these read RFPTTASSSLQT and MQNP…QPRL.

This sequence belongs to the HIN-200 family.

This is Interferon-activable protein 208 from Mus musculus (Mouse).